Reading from the N-terminus, the 607-residue chain is Dolichyl-diphosphooligosaccharide--protein glycosyltransferase subunit 1 (607 aa).

The signal sequence occupies residues 1–23 (MEAPAARLFLLLLLGTWAPAPGS). Residues 24-434 (ASSEAPPLIN…VVHYTFNKVL (411 aa)) lie on the Lumenal side of the membrane. Lysine 187 carries the post-translational modification N6-acetyllysine. A glycan (N-linked (GlcNAc...) asparagine) is linked at asparagine 299. Residues 435–455 (MLQEPLLVVAAFYILFFTVII) traverse the membrane as a helical segment. The Cytoplasmic portion of the chain corresponds to 456-607 (YVRLDFSITK…TKIDHILDAL (152 aa)). Lysine 538 is modified (N6-acetyllysine; alternate). Lysine 538 is covalently cross-linked (Glycyl lysine isopeptide (Lys-Gly) (interchain with G-Cter in SUMO2); alternate).

The protein belongs to the OST1 family. In terms of assembly, component of the oligosaccharyltransferase (OST) complex. OST exists in two different complex forms which contain common core subunits RPN1, RPN2, OST48, OST4, DAD1 and TMEM258, either STT3A or STT3B as catalytic subunits, and form-specific accessory subunits. STT3A complex assembly occurs through the formation of 3 subcomplexes. Subcomplex 1 contains RPN1 and TMEM258, subcomplex 2 contains the STT3A-specific subunits STT3A, DC2/OSTC, and KCP2 as well as the core subunit OST4, and subcomplex 3 contains RPN2, DAD1, and OST48. The STT3A complex can form stable complexes with the Sec61 complex or with both the Sec61 and TRAP complexes. Interacts with TMEM35A/NACHO. Ubiquitinated by the ECS(ASB11) complex. In terms of processing, ufmylated by UFL1 in response to endoplasmic reticulum stress, promoting reticulophagy of endoplasmic reticulum sheets.

It localises to the endoplasmic reticulum membrane. It participates in protein modification; protein glycosylation. In terms of biological role, subunit of the oligosaccharyl transferase (OST) complex that catalyzes the initial transfer of a defined glycan (Glc(3)Man(9)GlcNAc(2) in eukaryotes) from the lipid carrier dolichol-pyrophosphate to an asparagine residue within an Asn-X-Ser/Thr consensus motif in nascent polypeptide chains, the first step in protein N-glycosylation. N-glycosylation occurs cotranslationally and the complex associates with the Sec61 complex at the channel-forming translocon complex that mediates protein translocation across the endoplasmic reticulum (ER). All subunits are required for a maximal enzyme activity. In Pongo abelii (Sumatran orangutan), this protein is Dolichyl-diphosphooligosaccharide--protein glycosyltransferase subunit 1.